A 409-amino-acid chain; its full sequence is tRNA(Met) cytidine acetate ligase (409 aa).

Residues 7-20 (VVEY…HLYH), glycine 102, asparagine 169, and arginine 194 contribute to the ATP site.

The protein belongs to the TmcAL family.

Its subcellular location is the cytoplasm. It catalyses the reaction cytidine(34) in elongator tRNA(Met) + acetate + ATP = N(4)-acetylcytidine(34) in elongator tRNA(Met) + AMP + diphosphate. Its function is as follows. Catalyzes the formation of N(4)-acetylcytidine (ac(4)C) at the wobble position of elongator tRNA(Met), using acetate and ATP as substrates. First activates an acetate ion to form acetyladenylate (Ac-AMP) and then transfers the acetyl group to tRNA to form ac(4)C34. In Clostridium botulinum (strain ATCC 19397 / Type A), this protein is tRNA(Met) cytidine acetate ligase.